A 147-amino-acid chain; its full sequence is Cytochrome c-type biogenesis protein CcmE (147 aa).

The Cytoplasmic portion of the chain corresponds to 1-9; that stretch reads MKSLKKQRR. Residues 10–30 traverse the membrane as a helical; Signal-anchor for type II membrane protein segment; that stretch reads IQIIALATVALVGSTALIGYA. The Periplasmic portion of the chain corresponds to 31-147; that stretch reads MRDGINYFRS…EQGVYREGDS (117 aa). Heme is bound by residues His-123 and Tyr-127.

It belongs to the CcmE/CycJ family.

It is found in the cell inner membrane. Functionally, heme chaperone required for the biogenesis of c-type cytochromes. Transiently binds heme delivered by CcmC and transfers the heme to apo-cytochromes in a process facilitated by CcmF and CcmH. The polypeptide is Cytochrome c-type biogenesis protein CcmE (Ruegeria sp. (strain TM1040) (Silicibacter sp.)).